The primary structure comprises 189 residues: Probable nicotinate-nucleotide adenylyltransferase (189 aa).

This sequence belongs to the NadD family.

It carries out the reaction nicotinate beta-D-ribonucleotide + ATP + H(+) = deamido-NAD(+) + diphosphate. It participates in cofactor biosynthesis; NAD(+) biosynthesis; deamido-NAD(+) from nicotinate D-ribonucleotide: step 1/1. Its function is as follows. Catalyzes the reversible adenylation of nicotinate mononucleotide (NaMN) to nicotinic acid adenine dinucleotide (NaAD). The polypeptide is Probable nicotinate-nucleotide adenylyltransferase (Staphylococcus aureus (strain USA300 / TCH1516)).